Here is a 338-residue protein sequence, read N- to C-terminus: Ketol-acid reductoisomerase (NADP(+)) (338 aa).

One can recognise a KARI N-terminal Rossmann domain in the interval 1 to 181; sequence MKVYYENDAD…GGTKAGVIET (181 aa). NADP(+) contacts are provided by residues 24–27, Lys47, Ser50, Ser52, and 82–85; these read FGSQ and DQVQ. The active site involves His107. Gly133 provides a ligand contact to NADP(+). The region spanning 182-327 is the KARI C-terminal knotted domain; that stretch reads NFKDETETDL…EKLRGMMSWL (146 aa). Mg(2+) contacts are provided by Asp190, Glu194, Glu226, and Glu230. Residue Ser251 participates in substrate binding.

It belongs to the ketol-acid reductoisomerase family. It depends on Mg(2+) as a cofactor.

The enzyme catalyses (2R)-2,3-dihydroxy-3-methylbutanoate + NADP(+) = (2S)-2-acetolactate + NADPH + H(+). It catalyses the reaction (2R,3R)-2,3-dihydroxy-3-methylpentanoate + NADP(+) = (S)-2-ethyl-2-hydroxy-3-oxobutanoate + NADPH + H(+). Its pathway is amino-acid biosynthesis; L-isoleucine biosynthesis; L-isoleucine from 2-oxobutanoate: step 2/4. The protein operates within amino-acid biosynthesis; L-valine biosynthesis; L-valine from pyruvate: step 2/4. Functionally, involved in the biosynthesis of branched-chain amino acids (BCAA). Catalyzes an alkyl-migration followed by a ketol-acid reduction of (S)-2-acetolactate (S2AL) to yield (R)-2,3-dihydroxy-isovalerate. In the isomerase reaction, S2AL is rearranged via a Mg-dependent methyl migration to produce 3-hydroxy-3-methyl-2-ketobutyrate (HMKB). In the reductase reaction, this 2-ketoacid undergoes a metal-dependent reduction by NADPH to yield (R)-2,3-dihydroxy-isovalerate. This is Ketol-acid reductoisomerase (NADP(+)) from Chloroherpeton thalassium (strain ATCC 35110 / GB-78).